A 639-amino-acid polypeptide reads, in one-letter code: Coiled-coil domain-containing protein 93 homolog (639 aa).

The disordered stretch occupies residues 250–275; that stretch reads KLESQLSGKDGSGKDTTEAEREEEEK. A compositionally biased stretch (basic and acidic residues) spans 260–275; that stretch reads GSGKDTTEAEREEEEK. A coiled-coil region spans residues 332–492; the sequence is AEKLHRQKIT…KNRDISLIQR (161 aa).

The protein belongs to the CCDC93 family.

The protein is Coiled-coil domain-containing protein 93 homolog of Dictyostelium discoideum (Social amoeba).